Reading from the N-terminus, the 404-residue chain is Cysteine desulfurase IscS (404 aa).

Residues 75 to 76, Asn-155, Gln-183, and 203 to 205 each bind pyridoxal 5'-phosphate; these read AT and SAH. Lys-206 is subject to N6-(pyridoxal phosphate)lysine. Thr-243 lines the pyridoxal 5'-phosphate pocket. Cys-328 (cysteine persulfide intermediate) is an active-site residue. A [2Fe-2S] cluster-binding site is contributed by Cys-328.

Belongs to the class-V pyridoxal-phosphate-dependent aminotransferase family. NifS/IscS subfamily. Homodimer. Forms a heterotetramer with IscU, interacts with other sulfur acceptors. It depends on pyridoxal 5'-phosphate as a cofactor.

It localises to the cytoplasm. It carries out the reaction (sulfur carrier)-H + L-cysteine = (sulfur carrier)-SH + L-alanine. Its pathway is cofactor biosynthesis; iron-sulfur cluster biosynthesis. Its function is as follows. Master enzyme that delivers sulfur to a number of partners involved in Fe-S cluster assembly, tRNA modification or cofactor biosynthesis. Catalyzes the removal of elemental sulfur atoms from cysteine to produce alanine. Functions as a sulfur delivery protein for Fe-S cluster synthesis onto IscU, an Fe-S scaffold assembly protein, as well as other S acceptor proteins. The polypeptide is Cysteine desulfurase IscS (Vibrio vulnificus (strain CMCP6)).